The chain runs to 234 residues: Large ribosomal subunit protein uL1 (234 aa).

The protein belongs to the universal ribosomal protein uL1 family. Part of the 50S ribosomal subunit.

Binds directly to 23S rRNA. The L1 stalk is quite mobile in the ribosome, and is involved in E site tRNA release. In terms of biological role, protein L1 is also a translational repressor protein, it controls the translation of the L11 operon by binding to its mRNA. The sequence is that of Large ribosomal subunit protein uL1 from Cronobacter sakazakii (strain ATCC BAA-894) (Enterobacter sakazakii).